The chain runs to 89 residues: Mitochondrial import inner membrane translocase subunit Tim9 (89 aa).

Residue Ala-2 is modified to N-acetylalanine. The short motif at 28 to 52 is the Twin CX3C motif element; it reads CFLDCVKDFTTREVKPEEVTCSEHC. Cystine bridges form between Cys-28–Cys-52 and Cys-32–Cys-48.

This sequence belongs to the small Tim family. Heterohexamer; composed of 3 copies of TIMM9 and 3 copies of TIMM10/TIM10A, named soluble 70 kDa complex. The complex forms a 6-bladed alpha-propeller structure and associates with the TIMM22 component of the TIM22 complex. Interacts with multi-pass transmembrane proteins in transit. Also forms a complex composed of TIMM9, TIMM10/TIM10A and FXC1/TIM10B.

The protein localises to the mitochondrion inner membrane. In terms of biological role, mitochondrial intermembrane chaperone that participates in the import and insertion of multi-pass transmembrane proteins into the mitochondrial inner membrane. May also be required for the transfer of beta-barrel precursors from the TOM complex to the sorting and assembly machinery (SAM complex) of the outer membrane. Acts as a chaperone-like protein that protects the hydrophobic precursors from aggregation and guide them through the mitochondrial intermembrane space. The polypeptide is Mitochondrial import inner membrane translocase subunit Tim9 (Timm9) (Mus musculus (Mouse)).